A 248-amino-acid chain; its full sequence is Tyrosine recombinase XerD-like (248 aa).

A Core-binding (CB) domain is found at Met1–Tyr72. Residues Ser92–Met248 form the Tyr recombinase domain. Residue Arg213 is part of the active site. Tyr245 acts as the O-(3'-phospho-DNA)-tyrosine intermediate in catalysis.

The protein belongs to the 'phage' integrase family. XerD-like subfamily.

The protein localises to the cytoplasm. In terms of biological role, putative tyrosine recombinase. Not involved in the cutting and rejoining of the recombining DNA molecules on dif(SL) site. The chain is Tyrosine recombinase XerD-like from Streptococcus equi subsp. zooepidemicus (strain MGCS10565).